Consider the following 218-residue polypeptide: tRNA (guanine-N(7)-)-methyltransferase (218 aa).

Residues 1–26 form a disordered region; it reads MRLKNKPWANELVEEHPESALDRPDP. Basic and acidic residues predominate over residues 13–26; it reads VEEHPESALDRPDP. Residues glutamate 45, glutamate 70, aspartate 97, and aspartate 119 each coordinate S-adenosyl-L-methionine. Aspartate 119 is an active-site residue. Lysine 123 provides a ligand contact to substrate. The segment at 125-130 is interaction with RNA; the sequence is RHEKRR. Residues aspartate 155 and 195–198 each bind substrate; that span reads TEYE.

Belongs to the class I-like SAM-binding methyltransferase superfamily. TrmB family.

It catalyses the reaction guanosine(46) in tRNA + S-adenosyl-L-methionine = N(7)-methylguanosine(46) in tRNA + S-adenosyl-L-homocysteine. It functions in the pathway tRNA modification; N(7)-methylguanine-tRNA biosynthesis. Catalyzes the formation of N(7)-methylguanine at position 46 (m7G46) in tRNA. The sequence is that of tRNA (guanine-N(7)-)-methyltransferase from Lactobacillus delbrueckii subsp. bulgaricus (strain ATCC 11842 / DSM 20081 / BCRC 10696 / JCM 1002 / NBRC 13953 / NCIMB 11778 / NCTC 12712 / WDCM 00102 / Lb 14).